Here is a 497-residue protein sequence, read N- to C-terminus: Angiopoietin-1 (497 aa).

The N-terminal stretch at 1 to 15 (MTVFLSFAFLAAILT) is a signal peptide. N-linked (GlcNAc...) asparagine glycosylation is found at Asn-92, Asn-122, Asn-154, Asn-243, and Asn-294. A coiled-coil region spans residues 153-261 (LNQTSRLEIQ…LELMDTVHNL (109 aa)). In terms of domain architecture, Fibrinogen C-terminal spans 276–496 (KEEEKPFRDC…STTMMIRPLD (221 aa)). Disulfide bonds link Cys-285–Cys-314 and Cys-438–Cys-451.

Homooligomer. Interacts with TEK/TIE2. Interacts with SVEP1/polydom. Interacts with THBD; this interaction significantly inhibits the generation of activated PC and TAFIa/CPB2 by the thrombin/thrombomodulin complex.

The protein resides in the secreted. Functionally, binds and activates TIE2 receptor by inducing its tyrosine phosphorylation. Implicated in endothelial developmental processes later and distinct from that of VEGF. Appears to play a crucial role in mediating reciprocal interactions between the endothelium and surrounding matrix and mesenchyme. Mediates blood vessel maturation/stability. It may play an important role in the heart early development. The protein is Angiopoietin-1 (ANGPT1) of Bos taurus (Bovine).